A 344-amino-acid polypeptide reads, in one-letter code: Phosphate acyltransferase (344 aa).

Belongs to the PlsX family. As to quaternary structure, homodimer. Probably interacts with PlsY.

It localises to the cytoplasm. It carries out the reaction a fatty acyl-[ACP] + phosphate = an acyl phosphate + holo-[ACP]. The protein operates within lipid metabolism; phospholipid metabolism. In terms of biological role, catalyzes the reversible formation of acyl-phosphate (acyl-PO(4)) from acyl-[acyl-carrier-protein] (acyl-ACP). This enzyme utilizes acyl-ACP as fatty acyl donor, but not acyl-CoA. The chain is Phosphate acyltransferase from Yersinia enterocolitica serotype O:8 / biotype 1B (strain NCTC 13174 / 8081).